Consider the following 91-residue polypeptide: UPF0250 protein NGO_0791 (91 aa).

Belongs to the UPF0250 family.

This chain is UPF0250 protein NGO_0791, found in Neisseria gonorrhoeae (strain ATCC 700825 / FA 1090).